The following is a 227-amino-acid chain: D-lyxose/D-mannose isomerase (227 aa).

D-fructose contacts are provided by residues Lys90, 103 to 110 (HFHWRKRE), His171, Glu186, and Asp193. Mn(2+) is bound by residues His103, His105, Glu110, and His171.

It belongs to the D-lyxose ketol-isomerase family. In terms of assembly, homodimer; disulfide-linked. Dimerization is facilitated through a disulfide bond between the two monomers of the dimeric enzyme. It depends on Mn(2+) as a cofactor.

The enzyme catalyses D-lyxose = D-xylulose. It carries out the reaction D-mannose = D-fructose. In terms of biological role, sugar isomerase that catalyzes the reversible isomerization of D-lyxose to D-xylulose, and D-mannose to D-fructose. Shows similar activity toward D-lyxose and D-mannose with a turnover and catalytic efficiency for D-lyxose as a substrate only 1.1- and 1.3-fold higher than those for D-mannose, respectively. Shows weaker activity with L-gulose, D-talose, L-ribose and L-allose. Overexpression enables cell growth on the rare pentose D-lyxose as the sole carbon source. The chain is D-lyxose/D-mannose isomerase from Escherichia coli O157:H7.